Reading from the N-terminus, the 95-residue chain is Protein TRACHEARY ELEMENT DIFFERENTIATION-RELATED 6 (95 aa).

The Extracellular portion of the chain corresponds to 1–3; sequence MAT. A helical transmembrane segment spans residues 4–24; the sequence is IFIVFVSFGCVFVLGIAAFVL. Residues 25–95 are Cytoplasmic-facing; the sequence is CCLIKKWKCS…KLGTASTSKA (71 aa).

As to quaternary structure, interacts with the secondary cell wall (SCW)-related cellulose synthase complex. As to expression, accumulates in cells differentiating into tracheary element (TE) which undergo secondary cell wall (SCW) formation.

It localises to the cell membrane. It is found in the secreted. The protein resides in the cell wall. Its function is as follows. Involved in the secondary cell wall (SCW) formation of vessel elements (e.g. protoxylem and metaxylem), thus promoting tracheary element (TE) differentiation. The chain is Protein TRACHEARY ELEMENT DIFFERENTIATION-RELATED 6 from Zinnia elegans (Garden zinnia).